A 380-amino-acid polypeptide reads, in one-letter code: Queuine tRNA-ribosyltransferase (380 aa).

The active-site Proton acceptor is Asp-96. Residues 96-100 (DSGGF), Asp-150, Gln-193, and Gly-220 each bind substrate. Positions 251–257 (GVGAPDS) are RNA binding. Asp-270 acts as the Nucleophile in catalysis. The segment at 275 to 279 (TRIAR) is RNA binding; important for wobble base 34 recognition. The Zn(2+) site is built by Cys-308, Cys-310, Cys-313, and His-339.

Belongs to the queuine tRNA-ribosyltransferase family. Homodimer. Within each dimer, one monomer is responsible for RNA recognition and catalysis, while the other monomer binds to the replacement base PreQ1. Zn(2+) is required as a cofactor.

The catalysed reaction is 7-aminomethyl-7-carbaguanine + guanosine(34) in tRNA = 7-aminomethyl-7-carbaguanosine(34) in tRNA + guanine. It functions in the pathway tRNA modification; tRNA-queuosine biosynthesis. Its function is as follows. Catalyzes the base-exchange of a guanine (G) residue with the queuine precursor 7-aminomethyl-7-deazaguanine (PreQ1) at position 34 (anticodon wobble position) in tRNAs with GU(N) anticodons (tRNA-Asp, -Asn, -His and -Tyr). Catalysis occurs through a double-displacement mechanism. The nucleophile active site attacks the C1' of nucleotide 34 to detach the guanine base from the RNA, forming a covalent enzyme-RNA intermediate. The proton acceptor active site deprotonates the incoming PreQ1, allowing a nucleophilic attack on the C1' of the ribose to form the product. After dissociation, two additional enzymatic reactions on the tRNA convert PreQ1 to queuine (Q), resulting in the hypermodified nucleoside queuosine (7-(((4,5-cis-dihydroxy-2-cyclopenten-1-yl)amino)methyl)-7-deazaguanosine). The polypeptide is Queuine tRNA-ribosyltransferase (Streptococcus thermophilus (strain ATCC BAA-491 / LMD-9)).